Reading from the N-terminus, the 284-residue chain is 2-dehydro-3-deoxyphosphooctonate aldolase (284 aa).

It belongs to the KdsA family.

It localises to the cytoplasm. It catalyses the reaction D-arabinose 5-phosphate + phosphoenolpyruvate + H2O = 3-deoxy-alpha-D-manno-2-octulosonate-8-phosphate + phosphate. The protein operates within carbohydrate biosynthesis; 3-deoxy-D-manno-octulosonate biosynthesis; 3-deoxy-D-manno-octulosonate from D-ribulose 5-phosphate: step 2/3. Its pathway is bacterial outer membrane biogenesis; lipopolysaccharide biosynthesis. This chain is 2-dehydro-3-deoxyphosphooctonate aldolase, found in Salmonella paratyphi A (strain ATCC 9150 / SARB42).